The following is a 141-amino-acid chain: Hemoglobin subunit alpha (141 aa).

The Globin domain maps to 1 to 141 (VLSAKDKTNI…VSTVLTSKYR (141 aa)). At Ser-3 the chain carries Phosphoserine. Lys-7 carries the N6-succinyllysine modification. Residue Thr-8 is modified to Phosphothreonine. Lys-16 is subject to N6-acetyllysine; alternate. Lys-16 is modified (N6-succinyllysine; alternate). Position 24 is a phosphotyrosine (Tyr-24). The residue at position 40 (Lys-40) is an N6-succinyllysine. Ser-49 carries the phosphoserine modification. His-58 is a binding site for O2. His-87 lines the heme b pocket. At Ser-102 the chain carries Phosphoserine. Thr-108 is subject to Phosphothreonine. Ser-124 and Ser-131 each carry phosphoserine. Phosphothreonine is present on residues Thr-134 and Thr-137. Phosphoserine is present on Ser-138.

The protein belongs to the globin family. In terms of assembly, heterotetramer of two alpha chains and two beta chains. Red blood cells.

Involved in oxygen transport from the lung to the various peripheral tissues. Its function is as follows. Hemopressin acts as an antagonist peptide of the cannabinoid receptor CNR1. Hemopressin-binding efficiently blocks cannabinoid receptor CNR1 and subsequent signaling. The sequence is that of Hemoglobin subunit alpha (HBA) from Mesocricetus auratus (Golden hamster).